Consider the following 557-residue polypeptide: Mercuric reductase (557 aa).

One can recognise an HMA domain in the interval 1–65 (MILLSIEGMT…AIEALGYIAK (65 aa)). 2 residues coordinate a metal cation: cysteine 11 and cysteine 14. Residues alanine 106 and alanine 126 each contribute to the FAD site. Cysteine 133 and cysteine 138 are oxidised to a cystine. Residues lysine 142, alanine 207, aspartate 399, and valine 407 each coordinate FAD. Residues cysteine 554 and cysteine 555 each contribute to the Hg(2+) site.

This sequence belongs to the class-I pyridine nucleotide-disulfide oxidoreductase family. In terms of assembly, homodimer. It depends on FAD as a cofactor.

The enzyme catalyses Hg + NADP(+) + H(+) = Hg(2+) + NADPH. In terms of biological role, resistance to Hg(2+) in bacteria appears to be governed by a specialized system which includes mercuric reductase. MerA protein is responsible for volatilizing mercury as Hg(0). The chain is Mercuric reductase (merA) from Shewanella putrefaciens (Pseudomonas putrefaciens).